A 304-amino-acid chain; its full sequence is UTP--glucose-1-phosphate uridylyltransferase 1 (304 aa).

It belongs to the UDPGP type 2 family.

The catalysed reaction is alpha-D-glucose 1-phosphate + UTP + H(+) = UDP-alpha-D-glucose + diphosphate. It functions in the pathway carbohydrate metabolism; nucleotide-sugar metabolism. The chain is UTP--glucose-1-phosphate uridylyltransferase 1 (hasC1) from Streptococcus pyogenes serotype M18 (strain MGAS8232).